A 68-amino-acid chain; its full sequence is DNA-directed RNA polymerase subunit Rpo10 (68 aa).

Zn(2+) is bound by residues Cys-7, Cys-10, Cys-44, and Cys-45.

This sequence belongs to the archaeal Rpo10/eukaryotic RPB10 RNA polymerase subunit family. As to quaternary structure, part of the RNA polymerase complex. Zn(2+) is required as a cofactor.

It localises to the cytoplasm. It carries out the reaction RNA(n) + a ribonucleoside 5'-triphosphate = RNA(n+1) + diphosphate. Functionally, DNA-dependent RNA polymerase (RNAP) catalyzes the transcription of DNA into RNA using the four ribonucleoside triphosphates as substrates. This chain is DNA-directed RNA polymerase subunit Rpo10, found in Methanococcus maripaludis (strain C5 / ATCC BAA-1333).